Here is a 288-residue protein sequence, read N- to C-terminus: Mortality factor 4-like protein 2 (288 aa).

The span at 1-15 (MSSRKQGSQPRGQQS) shows a compositional bias: polar residues. The disordered stretch occupies residues 1–113 (MSSRKQGSQP…RADPTVESEE (113 aa)). Ser71 carries the post-translational modification Phosphoserine. An MRG domain is found at 117–288 (NRMEVKVKIP…ASAEYHRKAL (172 aa)).

As to quaternary structure, component of the NuA4 histone acetyltransferase complex which contains the catalytic subunit KAT5/TIP60 and the subunits EP400, TRRAP/PAF400, BRD8/SMAP, EPC1, DMAP1/DNMAP1, RUVBL1/TIP49, RUVBL2, ING3, actin, ACTL6A/BAF53A, MORF4L1/MRG15, MORF4L2/MRGX, MRGBP, YEATS4/GAS41 and VPS72/YL1. The NuA4 complex interacts with MYC and the adenovirus E1A protein. MORF4L1 may also participate in the formation of NuA4 related complexes which lack the KAT5/TIP60 catalytic subunit, but which include the SWI/SNF related protein SRCAP. Component of the MSIN3A histone deacetylase complex, which includes SIN3A, HDAC2, ARID4B, MORF4L1, RBBP4/RbAp48, and RBBP7/RbAp46. Interacts with MRFAP1 and RB1. May also interact with one or more as yet undefined members of the TLE (transducin-like enhancer of split) family of transcriptional repressors.

It localises to the nucleus. In terms of biological role, component of the NuA4 histone acetyltransferase complex which is involved in transcriptional activation of select genes principally by acetylation of nucleosomal histone H4 and H2A. This modification may both alter nucleosome - DNA interactions and promote interaction of the modified histones with other proteins which positively regulate transcription. This complex may be required for the activation of transcriptional programs associated with oncogene and proto-oncogene mediated growth induction, tumor suppressor mediated growth arrest and replicative senescence, apoptosis, and DNA repair. The NuA4 complex ATPase and helicase activities seem to be, at least in part, contributed by the association of RUVBL1 and RUVBL2 with EP400. NuA4 may also play a direct role in DNA repair when directly recruited to sites of DNA damage. Also a component of the MSIN3A complex which acts to repress transcription by deacetylation of nucleosomal histones. The protein is Mortality factor 4-like protein 2 (MORF4L2) of Homo sapiens (Human).